The sequence spans 178 residues: ATP-dependent protease subunit HslV (178 aa).

Threonine 5 is an active-site residue. The Na(+) site is built by glycine 161, cysteine 164, and threonine 167.

The protein belongs to the peptidase T1B family. HslV subfamily. As to quaternary structure, a double ring-shaped homohexamer of HslV is capped on each side by a ring-shaped HslU homohexamer. The assembly of the HslU/HslV complex is dependent on binding of ATP.

The protein resides in the cytoplasm. It catalyses the reaction ATP-dependent cleavage of peptide bonds with broad specificity.. Its activity is regulated as follows. Allosterically activated by HslU binding. Protease subunit of a proteasome-like degradation complex believed to be a general protein degrading machinery. This chain is ATP-dependent protease subunit HslV, found in Nitratiruptor sp. (strain SB155-2).